The chain runs to 147 residues: MKVILKKDVKKLGKKGDVVSVSDGYARNYLIPRGLAEEATRGNITQLKEKEKIKEKKHQQKIEEARDMASKLEKEKFVIKVKSGENGRLFGSVTTKDIAETVKKAGYKIDKRKIDLDDNIKALGTYRVPVKIFEDVVATLKIQVVEA.

It belongs to the bacterial ribosomal protein bL9 family.

Its function is as follows. Binds to the 23S rRNA. The sequence is that of Large ribosomal subunit protein bL9 from Halothermothrix orenii (strain H 168 / OCM 544 / DSM 9562).